A 447-amino-acid chain; its full sequence is Cysteine--tRNA ligase (447 aa).

Position 28 (Cys-28) interacts with Zn(2+). The short motif at 30 to 40 (PTVYNYIHIGN) is the 'HIGH' region element. Cys-211, His-236, and Glu-240 together coordinate Zn(2+). Positions 268-272 (KMSKS) match the 'KMSKS' region motif. Residue Lys-271 participates in ATP binding.

It belongs to the class-I aminoacyl-tRNA synthetase family. In terms of assembly, monomer. Zn(2+) is required as a cofactor.

The protein resides in the cytoplasm. It catalyses the reaction tRNA(Cys) + L-cysteine + ATP = L-cysteinyl-tRNA(Cys) + AMP + diphosphate. This Streptococcus thermophilus (strain CNRZ 1066) protein is Cysteine--tRNA ligase.